Here is a 60-residue protein sequence, read N- to C-terminus: Alpha-conotoxin-like 289 (60 aa).

The first 16 residues, 1–16, serve as a signal peptide directing secretion; it reads MFTVFLLVVLATTVVS. Residues 17-42 constitute a propeptide that is removed on maturation; that stretch reads FTSDRAFRGRNAAAKASGLVGLTDKR. Residue Gln-43 is modified to Pyrrolidone carboxylic acid. 2 disulfide bridges follow: Cys-45-Cys-51 and Cys-46-Cys-59. The interval 47-49 is ser-Xaa-Pro motif, crucial for potent interaction with nAChR; sequence SYP. Cys-59 is subject to Cysteine amide.

It belongs to the conotoxin A superfamily. As to expression, expressed by the venom duct.

The protein localises to the secreted. Alpha-conotoxins act on postsynaptic membranes, they bind to the nicotinic acetylcholine receptors (nAChR) and thus inhibit them. The sequence is that of Alpha-conotoxin-like 289 from Conus ammiralis (Admiral cone).